Consider the following 418-residue polypeptide: Glutamyl-tRNA reductase (418 aa).

Substrate is bound by residues 49–52 (TCNR), Ser-109, 114–116 (EPQ), and Gln-120. Residue Cys-50 is the Nucleophile of the active site. 189–194 (GAGETI) serves as a coordination point for NADP(+).

Belongs to the glutamyl-tRNA reductase family. In terms of assembly, homodimer.

It catalyses the reaction (S)-4-amino-5-oxopentanoate + tRNA(Glu) + NADP(+) = L-glutamyl-tRNA(Glu) + NADPH + H(+). Its pathway is porphyrin-containing compound metabolism; protoporphyrin-IX biosynthesis; 5-aminolevulinate from L-glutamyl-tRNA(Glu): step 1/2. In terms of biological role, catalyzes the NADPH-dependent reduction of glutamyl-tRNA(Glu) to glutamate 1-semialdehyde (GSA). The sequence is that of Glutamyl-tRNA reductase from Escherichia coli O7:K1 (strain IAI39 / ExPEC).